A 1024-amino-acid polypeptide reads, in one-letter code: Beta-galactosidase (1024 aa).

Substrate-binding residues include N103 and D202. D202 lines the Na(+) pocket. Mg(2+) is bound by residues E417, H419, and E462. Residues E462 and E538–H541 contribute to the substrate site. E462 serves as the catalytic Proton donor. The active-site Nucleophile is the E538. N598 lines the Mg(2+) pocket. Na(+) is bound by residues F602 and N605. Substrate is bound by residues N605 and W1000.

Belongs to the glycosyl hydrolase 2 family. In terms of assembly, homotetramer. Mg(2+) is required as a cofactor. It depends on Na(+) as a cofactor.

It carries out the reaction Hydrolysis of terminal non-reducing beta-D-galactose residues in beta-D-galactosides.. The polypeptide is Beta-galactosidase (Escherichia coli O127:H6 (strain E2348/69 / EPEC)).